The sequence spans 476 residues: UDP-N-acetylmuramate--L-alanine ligase (476 aa).

Position 123 to 129 (123 to 129 (GTHGKTT)) interacts with ATP.

Belongs to the MurCDEF family.

It localises to the cytoplasm. It catalyses the reaction UDP-N-acetyl-alpha-D-muramate + L-alanine + ATP = UDP-N-acetyl-alpha-D-muramoyl-L-alanine + ADP + phosphate + H(+). It functions in the pathway cell wall biogenesis; peptidoglycan biosynthesis. Its function is as follows. Cell wall formation. The chain is UDP-N-acetylmuramate--L-alanine ligase from Nitrosococcus oceani (strain ATCC 19707 / BCRC 17464 / JCM 30415 / NCIMB 11848 / C-107).